Here is a 75-residue protein sequence, read N- to C-terminus: CLAVATA3/ESR (CLE)-related protein 33 (75 aa).

The N-terminal stretch at 1-22 is a signal peptide; the sequence is MASWRMLCFVLLFTSILICHDA. 2 positions are modified to hydroxyproline: P67 and P70. A glycan (O-linked (Ara...) hydroxyproline) is linked at P70.

The protein belongs to the CLV3/ESR signal peptide family. In terms of processing, the O-glycosylation (arabinosylation) of the hydroxyproline Pro-70 enhances binding affinity of the CLE33p peptide for its receptor. In terms of tissue distribution, expressed in root vasculature.

The protein resides in the secreted. The protein localises to the extracellular space. Signaling peptide involved in the regulation of root colonization by arbuscular mycorrhizal (AM) fungi. Moves from root to shoot to function with the receptor kinase SUNN, in a signaling pathway that repress strigolactone biosynthetic genes and strigolactone content in the roots, and consequently reduces the promotion of further colonization by AM fungi. The sequence is that of CLAVATA3/ESR (CLE)-related protein 33 from Medicago truncatula (Barrel medic).